A 474-amino-acid chain; its full sequence is MSSVVTRFAPSPTGFLHIGGGRTALFNWLYARKHGGRMLLRIEDTDRERSTEAAIEAILDGLSWLGLDWDGDVIYQFARAARHREVAEGLLAAGRAYRCYASPEELTEMREAARREGRPLRYDGRWRDRNPSEAPPGVRPVIRLRAPVEGETVVEDEVQGRVVWQNKDLDDLVLLRSDGTPTYMLAVVVDDHDMGVTHVIRGDDHLTNAARQTQIYHALGWTVPSMSHIPLIHGPDGAKLSKRHGALGVDAYRGLGYLPAALRNYLVRLGWSHGDQEVFSTEEMVAAFDLKQIGRSPARFDFAKLENLNGQYIRATSDADLVAAIEAILPSQGPARGLPARFDDALRARFLAAMPGLKERAKTLIELLDSAYYLYAPRPLALDERAEGLLGNGGRERLAGVLPRLEALPDWSAASTEQAVRDFAEAAAVKLGHVAQPLRAALTGRATSPGLFDVMAVLGREESLGRLRDQARAA.

The short motif at 10-20 is the 'HIGH' region element; it reads PSPTGFLHIGG. The 'KMSKS' region motif lies at 239-243; sequence KLSKR. Residue Lys-242 participates in ATP binding.

Belongs to the class-I aminoacyl-tRNA synthetase family. Glutamate--tRNA ligase type 1 subfamily. In terms of assembly, monomer.

It is found in the cytoplasm. It catalyses the reaction tRNA(Glu) + L-glutamate + ATP = L-glutamyl-tRNA(Glu) + AMP + diphosphate. Functionally, catalyzes the attachment of glutamate to tRNA(Glu) in a two-step reaction: glutamate is first activated by ATP to form Glu-AMP and then transferred to the acceptor end of tRNA(Glu). The protein is Glutamate--tRNA ligase 1 of Methylobacterium sp. (strain 4-46).